A 183-amino-acid polypeptide reads, in one-letter code: MLMLEREKLARLIKKRSLKVADEPVFKLSSGKLSRYYVDLKQITFDPEGDYLIGKAMYELVKEFNPDACGGLTLGADPIAYAIAFVSLMDSNPIKPFVVRKEPKGHGMKRQIEGLLNPGERVAVLEDVVTTGSSALKAVKACREYGLEVIGVFAVVDREEGGRENIEKEGIPLYSLFKLSELL.

Residues R100, K101, K104, H106, and 126–134 (EDVVTTGSS) each bind 5-phospho-alpha-D-ribose 1-diphosphate. Positions 130 and 158 each coordinate orotate.

It belongs to the purine/pyrimidine phosphoribosyltransferase family. PyrE subfamily. In terms of assembly, homodimer. The cofactor is Mg(2+).

It carries out the reaction orotidine 5'-phosphate + diphosphate = orotate + 5-phospho-alpha-D-ribose 1-diphosphate. The protein operates within pyrimidine metabolism; UMP biosynthesis via de novo pathway; UMP from orotate: step 1/2. Catalyzes the transfer of a ribosyl phosphate group from 5-phosphoribose 1-diphosphate to orotate, leading to the formation of orotidine monophosphate (OMP). In Aquifex aeolicus (strain VF5), this protein is Orotate phosphoribosyltransferase.